Consider the following 306-residue polypeptide: MTNEFLHFEKISRQTWQSLHRKTTPPLTEEELESIKSFNDQISLQDVTDIYLPLAHLIQIYKRTKEDLAFSKGIFLQRESKSQPFIIGVSGSVAVGKSTTSRLLQILLSRTFTDATVELVTTDGFLYPNQTLIEQGILNRKGFPESYDMEALLNFLDRIKNGQDVDIPVYSHEVYDIVPEKKQSVKAADFVIVEGINVFQNPQNDRLYITDFFDFSIYVDAGVDDIESWYLDRFLKMLSLAQNDPDSYYYRFTQMPIGEVESFAHQVWISINLTNLQNYIEPTRNRAEVILHKSKNHEIDEIYLKK.

91 to 98 (GSVAVGKS) provides a ligand contact to ATP.

The protein belongs to the prokaryotic pantothenate kinase family.

The protein resides in the cytoplasm. The enzyme catalyses (R)-pantothenate + ATP = (R)-4'-phosphopantothenate + ADP + H(+). The protein operates within cofactor biosynthesis; coenzyme A biosynthesis; CoA from (R)-pantothenate: step 1/5. This is Pantothenate kinase from Streptococcus pneumoniae (strain JJA).